A 382-amino-acid polypeptide reads, in one-letter code: Protein farnesyltransferase subunit beta (382 aa).

PFTB repeat units lie at residues 78–119 (CERA…CLCD), 129–170 (RDRL…SLVG), 178–219 (FEGT…ALLG), 226–268 (EIKL…VIVA), and 286–328 (PEKL…SSIA). (2E,6E)-farnesyl diphosphate contacts are provided by residues 204 to 207 (HGGY) and 247 to 250 (RSNK). Residues Asp-253 and Cys-255 each coordinate Zn(2+). 256–259 (YSWW) lines the (2E,6E)-farnesyl diphosphate pocket. His-316 contributes to the Zn(2+) binding site.

Belongs to the protein prenyltransferase subunit beta family. In terms of assembly, heterodimer of an alpha(cwp1) and a beta(cpp1) subunit. Zn(2+) is required as a cofactor.

It carries out the reaction L-cysteinyl-[protein] + (2E,6E)-farnesyl diphosphate = S-(2E,6E)-farnesyl-L-cysteinyl-[protein] + diphosphate. In terms of biological role, catalyzes the transfer of a farnesyl moiety from farnesyl diphosphate to a cysteine at the fourth position from the C-terminus of several proteins. The beta(cpp1) subunit is responsible for peptide-binding. The polypeptide is Protein farnesyltransferase subunit beta (cpp1) (Schizosaccharomyces pombe (strain 972 / ATCC 24843) (Fission yeast)).